The sequence spans 443 residues: C4-dicarboxylate transport protein (443 aa).

7 consecutive transmembrane segments (helical) span residues 7 to 26 (SLYVQVIIAIVLGILVGALF), 46 to 63 (MVIAPIIFATVVSGVAHM), 76 to 98 (ALIYFEVVSTLALIIGMVVMNVL), 140 to 162 (LVSAFTGGELLPVLLVALLFGFA), 183 to 205 (VVFVILGFIMRLAPIGAFGAMAF), 218 to 240 (LGYLMGSFYLTCLLFIFVVLGLI), and 350 to 372 (FITLAATLGAVGHVPVAGMALIL). A disordered region spans residues 415 to 443 (GEDLPTTEPDVASEERGEGREIDSSRPVT). Over residues 427–443 (SEERGEGREIDSSRPVT) the composition is skewed to basic and acidic residues.

Belongs to the dicarboxylate/amino acid:cation symporter (DAACS) (TC 2.A.23) family.

The protein resides in the cell membrane. Functionally, responsible for the transport of dicarboxylates such as succinate, fumarate, and malate across the membrane. The polypeptide is C4-dicarboxylate transport protein (dctA) (Deinococcus radiodurans (strain ATCC 13939 / DSM 20539 / JCM 16871 / CCUG 27074 / LMG 4051 / NBRC 15346 / NCIMB 9279 / VKM B-1422 / R1)).